Consider the following 141-residue polypeptide: MEQTLSIIKPDSVGKAHIGEIVAIFEKAGFRIAAMKMVHLSAKEAEGFYAVHKSRPFFQELVDFMISGPVVVMVLEGDNAVVRNREIMGATNPQEAAQGTIRAQFGESIGINAVHGSDSLENAAIEISYFFSKTEIVNSVE.

6 residues coordinate ATP: lysine 9, phenylalanine 57, arginine 85, threonine 91, arginine 102, and asparagine 112. The active-site Pros-phosphohistidine intermediate is the histidine 115.

It belongs to the NDK family. Homotetramer. Mg(2+) is required as a cofactor.

The protein localises to the cytoplasm. The enzyme catalyses a 2'-deoxyribonucleoside 5'-diphosphate + ATP = a 2'-deoxyribonucleoside 5'-triphosphate + ADP. The catalysed reaction is a ribonucleoside 5'-diphosphate + ATP = a ribonucleoside 5'-triphosphate + ADP. Functionally, major role in the synthesis of nucleoside triphosphates other than ATP. The ATP gamma phosphate is transferred to the NDP beta phosphate via a ping-pong mechanism, using a phosphorylated active-site intermediate. The polypeptide is Nucleoside diphosphate kinase (Chlamydia felis (strain Fe/C-56) (Chlamydophila felis)).